A 204-amino-acid chain; its full sequence is Pro-glucagon (204 aa).

Positions 1–20 (MTSMYFVAGLLLMIVQGSWQ) are cleaved as a signal peptide. The propeptide occupies 84 to 109 (SGQQGVEEREKENLLDQLSSNGLARH). R145 carries the arginine amide modification. Propeptides lie at residues 149 to 161 (DFLEEAGTADDIG) and 197 to 204 (RDLLGEYQ).

The protein belongs to the glucagon family. In terms of tissue distribution, isoform LPII is expressed in both pancreas and intestine. Expression of isoform LPI is restricted to the pancreas. Neither isoform is detected in salivary glands.

The protein resides in the secreted. Plays a key role in glucose metabolism and homeostasis. Regulates blood glucose by increasing gluconeogenesis and decreasing glycolysis. In terms of biological role, potent stimulator of glucose-dependent insulin release. Plays important roles on gastric motility and the suppression of plasma glucagon levels. Its function is as follows. Stimulates intestinal growth and up-regulates villus height in the small intestine, concomitant with increased crypt cell proliferation and decreased enterocyte apoptosis. This chain is Pro-glucagon (GCG), found in Heloderma suspectum (Gila monster).